We begin with the raw amino-acid sequence, 62 residues long: MLILTRRVGETLMIGDDVSVTVLGVKGNQVRIGVNAPKDVSVHREEIYMRIQSEKDDEQDKE.

Belongs to the CsrA/RsmA family. In terms of assembly, homodimer; the beta-strands of each monomer intercalate to form a hydrophobic core, while the alpha-helices form wings that extend away from the core.

It localises to the cytoplasm. Its function is as follows. A key translational regulator that binds mRNA to regulate translation initiation and/or mRNA stability. Mediates global changes in gene expression, shifting from rapid growth to stress survival by linking envelope stress, the stringent response and the catabolite repression systems. Usually binds in the 5'-UTR; binding at or near the Shine-Dalgarno sequence prevents ribosome-binding, repressing translation, binding elsewhere in the 5'-UTR can activate translation and/or stabilize the mRNA. Its function is antagonized by small RNA(s). The chain is Translational regulator CsrA from Idiomarina loihiensis (strain ATCC BAA-735 / DSM 15497 / L2-TR).